The following is a 403-amino-acid chain: S-adenosylmethionine synthase (403 aa).

Position 17 (His17) interacts with ATP. Asp19 is a binding site for Mg(2+). A K(+)-binding site is contributed by Glu45. The L-methionine site is built by Glu58 and Gln104. The flexible loop stretch occupies residues 104 to 114 (QSPDIAQGVDT). ATP contacts are provided by residues 179 to 181 (DGK), 250 to 251 (KF), Asp259, 265 to 266 (RK), Ala282, and Lys286. L-methionine is bound at residue Asp259. Residue Lys290 participates in L-methionine binding.

Belongs to the AdoMet synthase family. As to quaternary structure, homotetramer; dimer of dimers. It depends on Mg(2+) as a cofactor. The cofactor is K(+).

Its subcellular location is the cytoplasm. The catalysed reaction is L-methionine + ATP + H2O = S-adenosyl-L-methionine + phosphate + diphosphate. It participates in amino-acid biosynthesis; S-adenosyl-L-methionine biosynthesis; S-adenosyl-L-methionine from L-methionine: step 1/1. Functionally, catalyzes the formation of S-adenosylmethionine (AdoMet) from methionine and ATP. The overall synthetic reaction is composed of two sequential steps, AdoMet formation and the subsequent tripolyphosphate hydrolysis which occurs prior to release of AdoMet from the enzyme. The polypeptide is S-adenosylmethionine synthase (Mycobacterium ulcerans (strain Agy99)).